Consider the following 473-residue polypeptide: Photosystem II CP43 reaction center protein (473 aa).

The propeptide occupies 1 to 14; the sequence is MKTLYSPRRYYPVE. The residue at position 15 (threonine 15) is an N-acetylthreonine. Residue threonine 15 is modified to Phosphothreonine. 5 helical membrane-spanning segments follow: residues 69–93, 134–155, 178–200, 255–275, and 291–312; these read LFEVAHFVPEKPMYEQGLILLPHLA, IIGPETLEESFPFFGYVWKDKN, KAVWFGGVYDTWAPGGGDVRVIT, KPFAWARRAFVWSGEAYLSYS, and WFNNTAYPSEFYGPTGPEASQA. Glutamate 367 contributes to the [CaMn4O5] cluster binding site. A helical transmembrane segment spans residues 447 to 471; sequence RARAAAAGFEKGIERETEPVLFMSP.

Belongs to the PsbB/PsbC family. PsbC subfamily. PSII is composed of 1 copy each of membrane proteins PsbA, PsbB, PsbC, PsbD, PsbE, PsbF, PsbH, PsbI, PsbJ, PsbK, PsbL, PsbM, PsbT, PsbX, PsbY, PsbZ, Psb30/Ycf12, at least 3 peripheral proteins of the oxygen-evolving complex and a large number of cofactors. It forms dimeric complexes. It depends on Binds multiple chlorophylls and provides some of the ligands for the Ca-4Mn-5O cluster of the oxygen-evolving complex. It may also provide a ligand for a Cl- that is required for oxygen evolution. PSII binds additional chlorophylls, carotenoids and specific lipids. as a cofactor.

The protein resides in the plastid. The protein localises to the chloroplast thylakoid membrane. In terms of biological role, one of the components of the core complex of photosystem II (PSII). It binds chlorophyll and helps catalyze the primary light-induced photochemical processes of PSII. PSII is a light-driven water:plastoquinone oxidoreductase, using light energy to abstract electrons from H(2)O, generating O(2) and a proton gradient subsequently used for ATP formation. The chain is Photosystem II CP43 reaction center protein from Chaetosphaeridium globosum (Charophycean green alga).